The primary structure comprises 489 residues: Major aspartyl peptidase 1 (489 aa).

The first 16 residues, 1 to 16 (MHYLAVALPLLTLALA), serve as a signal peptide directing secretion. The 332-residue stretch at 101–432 (YAGQVSIGTP…RYNPAAIGFA (332 aa)) folds into the Peptidase A1 domain. Residue aspartate 119 is part of the active site. Position 121 (glycine 121) interacts with pepstatin A. Cysteine 132 and cysteine 137 are disulfide-bonded. Pepstatin A-binding residues include threonine 161, glycine 163, and serine 164. N-linked (GlcNAc...) asparagine glycosylation is present at asparagine 266. Tyrosine 286 is a binding site for pepstatin A. Aspartate 317 is a catalytic residue. Threonine 320 and threonine 321 together coordinate pepstatin A. Cysteine 357 and cysteine 391 are oxidised to a cystine. The tract at residues 442–466 (AGNPSSSTTGGGTSGSNGGGSSSGA) is disordered. Residues 450 to 463 (TGGGTSGSNGGGSS) are compositionally biased toward gly residues. A propeptide spans 456 to 489 (GSNGGGSSSGAMERKGVQLGWLVGAVAVGVAAMI) (removed at pH 5.0; by autocatalysis).

This sequence belongs to the peptidase A1 family. In terms of assembly, monomer. Post-translationally, activated by the autocatalytic cleavage of the propeptide. Cleaved at the end of the propeptide promiscuously from residue 76 to residue 79. C-terminal cleavage by autocatalysis at Gly-456 at the pH optimum indicating a possible regulatory or other function of this propeptide.

The protein localises to the secreted. Activated by low pH. Inhibited by pepstatin A with an IC(50) of 1.4 nM. Inhibited by acetyl pepstatin. Inhibited by HIV antiretroviral therapy protease inhibitors including amprenavir and ritonavir. Inhibited by HIV-1 protease inhibitor brecanavir with an approximate IC(50) of 352 nM. Inhibited by HIV-1 protease inhibitors CGP53437 and GS-8374. From the tested peptidomimetic inhibitor molecules, macrocycles containing P2-P3' tethered side chains, statines in P1 and an alpha amino acid in P2' are the best. From the linear peptidomimetic inhibitors, the ones with a phenylstatine or hydroxyethylamine scissile bond isoster are better than compounds with a reduced bond or a homo-amide. Overall, inhibitors with a phenylalanine side chain, either unsubstituted or with a small substituent, is preferred in P1 while a bulkier P1 side chain leads to lower inhibition. In terms of biological role, possesses prevalent extracellular endopeptidase activity at low pH condition. Required for high-density growth in acidic environments. Broad substrate specificity with preference cleavage of the peptide substrate between hydrophobic amino acids. Cleaves substrate at P1-P1' between Phe-Leu. Positively charged amino acids are preferred at P2. Prefers hydrophobic amino acids at the P3 and P4 positions. Cleaves substrate also at P1'-P2' between Leu-Val to some degree. Required for virulence in mouse inhalation model of infection. The protein is Major aspartyl peptidase 1 of Cryptococcus neoformans var. grubii serotype A (strain H99 / ATCC 208821 / CBS 10515 / FGSC 9487) (Filobasidiella neoformans var. grubii).